Consider the following 327-residue polypeptide: Putative hydroxymethylpyrimidine/phosphomethylpyrimidine kinase C18B5.05c (327 aa).

Residue glutamine 54 participates in 4-amino-5-hydroxymethyl-2-methylpyrimidine binding.

It belongs to the ThiD family.

It is found in the cytoplasm. It localises to the nucleus. It catalyses the reaction 4-amino-5-hydroxymethyl-2-methylpyrimidine + ATP = 4-amino-2-methyl-5-(phosphooxymethyl)pyrimidine + ADP + H(+). The catalysed reaction is 4-amino-2-methyl-5-(phosphooxymethyl)pyrimidine + ATP = 4-amino-2-methyl-5-(diphosphooxymethyl)pyrimidine + ADP. The protein operates within cofactor biosynthesis; thiamine diphosphate biosynthesis; 4-amino-2-methyl-5-diphosphomethylpyrimidine from 5-amino-1-(5-phospho-D-ribosyl)imidazole: step 2/3. Its pathway is cofactor biosynthesis; thiamine diphosphate biosynthesis; 4-amino-2-methyl-5-diphosphomethylpyrimidine from 5-amino-1-(5-phospho-D-ribosyl)imidazole: step 3/3. In terms of biological role, catalyzes the phosphorylation of hydroxymethylpyrimidine phosphate (HMP-P) to HMP-PP, and of HMP to HMP-P. The protein is Putative hydroxymethylpyrimidine/phosphomethylpyrimidine kinase C18B5.05c of Schizosaccharomyces pombe (strain 972 / ATCC 24843) (Fission yeast).